Consider the following 310-residue polypeptide: Putative sugar kinase PH1459 (310 aa).

3 residues coordinate ATP: K194, T219, and G224.

Belongs to the carbohydrate kinase PfkB family.

This is Putative sugar kinase PH1459 from Pyrococcus horikoshii (strain ATCC 700860 / DSM 12428 / JCM 9974 / NBRC 100139 / OT-3).